Here is a 102-residue protein sequence, read N- to C-terminus: Vacuolar ATPase assembly integral membrane protein VMA21 (102 aa).

The Cytoplasmic portion of the chain corresponds to 1 to 30 (MERYDKATLNAAFAPEFRQNEGSLTSTLRT). The chain crosses the membrane as a helical span at residues 31 to 51 (LLFFTALMITLPVGLYFSSKA). The Lumenal portion of the chain corresponds to 52–66 (YIFEGTLGMSNRDSY). A helical membrane pass occupies residues 67 to 87 (FYAAIVAVVTVHVVLAMFVYV). The Cytoplasmic portion of the chain corresponds to 88-102 (AWSEGTRQWREGKQD).

It belongs to the VMA21 family. Associates with the V0 complex of the vacuolar ATPase (V-ATPase). Interacts with ATP6AP2.

It is found in the endoplasmic reticulum membrane. The protein resides in the endoplasmic reticulum-Golgi intermediate compartment membrane. The protein localises to the cytoplasmic vesicle. It localises to the COPII-coated vesicle membrane. Required for the assembly of the V0 complex of the vacuolar ATPase (V-ATPase) in the endoplasmic reticulum. The protein is Vacuolar ATPase assembly integral membrane protein VMA21 of Gallus gallus (Chicken).